An 89-amino-acid polypeptide reads, in one-letter code: Sec-independent protein translocase protein TatA (89 aa).

Residues 1 to 21 traverse the membrane as a helical segment; the sequence is MFGLSPAQLIILLVVILLIFG.

It belongs to the TatA/E family. As to quaternary structure, the Tat system comprises two distinct complexes: a TatABC complex, containing multiple copies of TatA, TatB and TatC subunits, and a separate TatA complex, containing only TatA subunits. Substrates initially bind to the TatABC complex, which probably triggers association of the separate TatA complex to form the active translocon.

The protein resides in the cell inner membrane. Functionally, part of the twin-arginine translocation (Tat) system that transports large folded proteins containing a characteristic twin-arginine motif in their signal peptide across membranes. TatA could form the protein-conducting channel of the Tat system. The chain is Sec-independent protein translocase protein TatA from Haemophilus influenzae (strain ATCC 51907 / DSM 11121 / KW20 / Rd).